A 105-amino-acid polypeptide reads, in one-letter code: Putative zinc finger protein 861 (105 aa).

Residues 75–97 (YTCKPCGNAFRFHHSFHIHERPH) form a C2H2-type zinc finger.

This chain is Putative zinc finger protein 861 (ZNF861P), found in Homo sapiens (Human).